Consider the following 154-residue polypeptide: Protein E6 (154 aa).

2 zinc fingers span residues 34 to 70 (CVFCKKALTASEVYNFAYTDLRVVYRDGYPYGVCKFC) and 107 to 143 (CYRCQHPLTPEEKQLHCDYKKRFHKISHMWTGSCLTC).

The protein belongs to the papillomaviridae E6 protein family. In terms of assembly, forms homodimers. Interacts with ubiquitin-protein ligase UBE3A/E6-AP; this interaction stimulates UBE3A ubiquitin activity. Interacts with host TP53 and EP300; this interaction inhibits TP53 activity.

The protein resides in the host cytoplasm. The protein localises to the host nucleus. Functionally, plays a major role in the induction and maintenance of cellular transformation. E6 associates with host UBE3A/E6-AP ubiquitin-protein ligase and modulates its activity. Sequesters tumor suppressor TP53 in the host cytoplasm and modulates its activity by interacting with host EP300 that results in the reduction of TP53 acetylation and activation. In turn, apoptosis induced by DNA damage is inhibited. E6 also protects host keratinocytes from apoptosis by mediating the degradation of host BAK1. May also inhibit host immune response. This Human papillomavirus type 53 protein is Protein E6.